Consider the following 253-residue polypeptide: MRILLSNDDGVTAPGIQVLAAALREFAEVQVVAPDRNRSGSSNALTLESPLRTLTMPNGDIAVQQGTPTDCVYLGVNALMQPAPDIVVSGINAGPNLGDDVIYSGTVAAAMEGRHLGLPALAVSLNGHQHYATAAAITCRVLRALQREPLRTGKILNINVPDLPLDQIKGIRVTRCGSRHPADKVFCQQDPRGQNLYWIGPPGDKFDAGPDTDFAAVEQGYVAITPLQVDLTAYAAQDVVKTWLTKAGVGGEW.

Positions 8, 9, 39, and 92 each coordinate a divalent metal cation.

The protein belongs to the SurE nucleotidase family. The cofactor is a divalent metal cation.

It is found in the cytoplasm. It carries out the reaction a ribonucleoside 5'-phosphate + H2O = a ribonucleoside + phosphate. The enzyme catalyses a ribonucleoside 3'-phosphate + H2O = a ribonucleoside + phosphate. The catalysed reaction is [phosphate](n) + H2O = [phosphate](n-1) + phosphate + H(+). Functionally, nucleotidase with a broad substrate specificity as it can dephosphorylate various ribo- and deoxyribonucleoside 5'-monophosphates and ribonucleoside 3'-monophosphates with highest affinity to 3'-AMP. Also hydrolyzes polyphosphate (exopolyphosphatase activity) with the preference for short-chain-length substrates (P20-25). Might be involved in the regulation of dNTP and NTP pools, and in the turnover of 3'-mononucleotides produced by numerous intracellular RNases (T1, T2, and F) during the degradation of various RNAs. The chain is 5'/3'-nucleotidase SurE from Serratia proteamaculans (strain 568).